Here is a 623-residue protein sequence, read N- to C-terminus: Set1/Ash2 histone methyltransferase complex subunit ASH2 (623 aa).

Over residues 1-18 the composition is skewed to gly residues; sequence MAAAGAGPGPGVSAGPGP. The PHD-type; atypical zinc finger occupies 1–62; that stretch reads MAAAGAGPGP…SGEAESGDAN (62 aa). Residues 1-99 are disordered; that stretch reads MAAAGAGPGP…MDTQAGSVDE (99 aa). The span at 36 to 56 shows a compositional bias: low complexity; that stretch reads AAGAGEGPSAAPGAEPSSGEA. Residues 63–172 form a DNA-binding region; it reads LVDVSGLETE…MCLSALANLT (110 aa). Positions 84–95 are enriched in polar residues; sequence GDTSEVMDTQAG. S96 carries the phosphoserine modification. The segment at 112–145 adopts a C4-type zinc-finger fold; it reads CGICTKWFTADTFGIDTSSCLPFMTNYSFHCNVC. Residues 230 to 247 are compositionally biased toward basic and acidic residues; that stretch reads LVKEHPDPGSKDPEEDYP. The disordered stretch occupies residues 230–326; it reads LVKEHPDPGS…AQRLPPHGYP (97 aa). A compositionally biased stretch (polar residues) spans 265 to 277; the sequence is NQKQSSAVSASGN. A compositionally biased stretch (gly residues) spans 278–290; it reads LNGGIAAGSSGKG. At R291 the chain carries Asymmetric dimethylarginine; by PRMT1 and PRMT5. S311 carries the post-translational modification Phosphoserine. The interaction with RBBP5 stretch occupies residues 311–623; the sequence is SDPLFSAQRL…DGRRSPPWEP (313 aa). In terms of domain architecture, B30.2/SPRY spans 355 to 578; the sequence is LDCWAGKPIP…VSINFGPSFK (224 aa).

In terms of assembly, interacts with HCFC1. Core component of several methyltransferase-containing complexes including MLL1/MLL, MLL2/3 (also named ASCOM complex) and MLL4/WBP7. Each complex is at least composed of ASH2L, RBBP5, WDR5, DPY30, one or more specific histone methyltransferases (KMT2A/MLL1, KMT2D/MLL2, KMT2C/MLL3 and KMT2B/MLL4), and the facultative components PAGR1, BACC1, CHD8, E2F6, HCFC1, HCFC2, HSP70, INO80C, KDM6A, KANSL1, LAS1L, MAX, MCRS1, MEN1, MGA, KAT8/MOF, NCOA6, PAXIP1/PTIP, PELP1, PHF20, PRP31, RING2, RUVB1/TIP49A, RUVB2/TIP49B, SENP3, TAF1, TAF4, TAF6, TAF7, TAF9, TEX10 and alpha- and beta-tubulin. Component of the SET1 complex, at least composed of the catalytic subunit (SETD1A or SETD1B), WDR5, WDR82, RBBP5, ASH2L/ASH2, CXXC1/CFP1, HCFC1 and DPY30. Found in a complex with RBBP5, ASH2L, DPY30, KMT2A, KMT2D and WDR5. Component of a histone methylation complex composed of at least ZNF335, RBBP5, ASH2L and WDR5; the complex may have histone H3-specific methyltransferase activity, however does not have specificity for 'Lys-4' of histone H3. Within the complex, interacts with ZNF335. Interacts with RBBP5. Components of this complex may associate with components of a nuclear receptor-mediated transcription complex to form a complex at least composed of ZNF335, HCFC1, CCAR2, EMSY, MKI67, RBBP5, ASH2L and WDR5. Within this complex also interacts with CCAR2 and EMSY. Interacts with DPY30. Interacts with SETD1A and SETD1B. Both monomethylated and dimethylated on arginine residues in the C-terminus. Arg-291 is the major site. Methylation is not required for nuclear localization, nor for MLL complex integrity or maintenance of global histone H3K4me3 levels. Ubiquitously expressed, with abundant expression in the heart, skeletal muscle and kidney. Low expression is seen in spleen, lung and testis.

The protein resides in the nucleus. Transcriptional regulator. Component or associated component of some histone methyltransferase complexes which regulates transcription through recruitment of those complexes to gene promoters. Component of the Set1/Ash2 histone methyltransferase (HMT) complex, a complex that specifically methylates 'Lys-4' of histone H3, but not if the neighboring 'Lys-9' residue is already methylated. As part of the MLL1/MLL complex it is involved in methylation and dimethylation at 'Lys-4' of histone H3. May play a role in hematopoiesis. In association with RBBP5 and WDR5, stimulates the histone methyltransferase activities of KMT2A, KMT2B, KMT2C, KMT2D, SETD1A and SETD1B. This is Set1/Ash2 histone methyltransferase complex subunit ASH2 (Ash2l) from Mus musculus (Mouse).